The sequence spans 242 residues: RNA polymerase sigma factor for flagellar operon (242 aa).

The short motif at Asp55–Gly68 is the Polymerase core binding element. The segment at residues Leu211–Lys230 is a DNA-binding region (H-T-H motif).

This sequence belongs to the sigma-70 factor family.

Its function is as follows. Sigma factors are initiation factors that promote the attachment of RNA polymerase to specific initiation sites and are then released. This alternative sigma factor is specific for the flagellin gene (fliC) expression. The protein is RNA polymerase sigma factor for flagellar operon (lafS) of Vibrio parahaemolyticus serotype O3:K6 (strain RIMD 2210633).